Consider the following 365-residue polypeptide: Zinc transporter 7 (365 aa).

The signal sequence occupies residues Met1–Ala26. Topologically, residues Gly27–Lys56 are extracellular. Residues Ile57–Ser77 form a helical membrane-spanning segment. The Cytoplasmic segment spans residues Arg78 to Ser90. Residues Val91–Pro111 traverse the membrane as a helical segment. Residues Asp112 to Lys129 are Extracellular-facing. The helical transmembrane segment at Phe130–Phe150 threads the bilayer. Residues Ala151–Lys210 lie on the Cytoplasmic side of the membrane. The chain crosses the membrane as a helical span at residues Val211–Met231. At Gly232–Ser242 the chain is on the extracellular side. Residues Leu243–Leu263 form a helical membrane-spanning segment. The Cytoplasmic segment spans residues Gln264–Asn272. A helical membrane pass occupies residues Trp273–Ile293. The Extracellular segment spans residues Gln294–Ala304. Residues Leu305–Val325 form a helical membrane-spanning segment. Residues Asn326–His344 are Cytoplasmic-facing. The chain crosses the membrane as a helical span at residues Val345–Ala365.

The protein belongs to the ZIP transporter (TC 2.A.5) family.

It localises to the cell membrane. Probably mediates zinc uptake from the rhizosphere. This chain is Zinc transporter 7 (ZIP7), found in Arabidopsis thaliana (Mouse-ear cress).